The sequence spans 185 residues: Ribosome-recycling factor (185 aa).

Belongs to the RRF family.

It is found in the cytoplasm. Responsible for the release of ribosomes from messenger RNA at the termination of protein biosynthesis. May increase the efficiency of translation by recycling ribosomes from one round of translation to another. The protein is Ribosome-recycling factor of Coxiella burnetii (strain CbuK_Q154) (Coxiella burnetii (strain Q154)).